The chain runs to 303 residues: Putative S-adenosyl-L-methionine-dependent methyltransferase ML2020 (303 aa).

S-adenosyl-L-methionine is bound by residues Asp130 and 159–160 (DL).

The protein belongs to the UPF0677 family.

Its function is as follows. Exhibits S-adenosyl-L-methionine-dependent methyltransferase activity. This chain is Putative S-adenosyl-L-methionine-dependent methyltransferase ML2020, found in Mycobacterium leprae (strain TN).